The following is a 398-amino-acid chain: Cholinephosphotransferase 1 (398 aa).

Position 2 is an N-acetylalanine (alanine 2). The Cytoplasmic segment spans residues 2–62 (AAGAGARPAP…LLQWIPLWMA (61 aa)). The chain crosses the membrane as a helical span at residues 63 to 83 (PNTITLIGLAINLVTTLVLIF). Position 64 (asparagine 64) interacts with CDP-choline. Topologically, residues 84–93 (YCPTVTEEAP) are lumenal. A helical transmembrane segment spans residues 94–118 (YWTYLLCALGLFIYQSLDAIDGKQA). Aspartate 111 and aspartate 114 together coordinate Mg(2+). A CDP-choline-binding site is contributed by arginine 119. The Cytoplasmic portion of the chain corresponds to 119 to 125 (RRTNSCS). A helical membrane pass occupies residues 126-150 (PLGELFDHGCDSLSTVFMAIGASIA). Aspartate 132 contacts Mg(2+). Histidine 133 acts as the Proton acceptor in catalysis. Aspartate 136 lines the Mg(2+) pocket. Over 151-160 (VRLGTHPDWL) the chain is Lumenal. A helical transmembrane segment spans residues 161 to 179 (FFCSFVGMFMFYCAHWQTY). The Cytoplasmic segment spans residues 180 to 190 (VSGVLRFGRVD). A helical transmembrane segment spans residues 191-207 (VTEIQVALVIVFMLSTF). At 208 to 222 (GGATMWDYTIPILEI) the chain is on the lumenal side. Residues 223 to 248 (KLKIVPVLGVVGGLIFSCSNYFHVIL) traverse the membrane as a helical segment. At 249-265 (HGGVGKNGSTIAGTSVL) the chain is on the cytoplasmic side. Residues 266–281 (SPGLHIGLIIILAIMI) traverse the membrane as a helical segment. Topologically, residues 282-293 (YKKSATNMFEKH) are lumenal. The helical transmembrane segment at 294–316 (PCLYTLMFGCVFAKVAQKLVIAH) threads the bilayer. Residues 317 to 329 (MTKSELYLQDTVF) lie on the Cytoplasmic side of the membrane. A helical transmembrane segment spans residues 330–339 (IGPGLLFLDQ). At 340-346 (YFNNFID) the chain is on the lumenal side. A helical transmembrane segment spans residues 347–376 (EYVVLWIAMVISSFDMMIYFTSLCLQISRH). At 377 to 398 (LHLNIFKTSCQQAPEQVYKHID) the chain is on the cytoplasmic side.

The protein belongs to the CDP-alcohol phosphatidyltransferase class-I family. The cofactor is Mg(2+). It depends on Mn(2+) as a cofactor. As to expression, expressed in brain, heart, lung, liver, spleen, intestine and muscle. Down-regulated in kidney of type 2 diabetic KK/Ta mice.

It localises to the golgi apparatus membrane. The catalysed reaction is CDP-choline + a 1,2-diacyl-sn-glycerol = a 1,2-diacyl-sn-glycero-3-phosphocholine + CMP + H(+). The enzyme catalyses 1-octadecanoyl-2-(5Z,8Z,11Z,14Z-eicosatetraenoyl)-sn-glycerol + CDP-choline = 1-octadecanoyl-2-(5Z,8Z,11Z,14Z-eicosatetraenoyl)-sn-glycero-3-phosphocholine + CMP + H(+). It carries out the reaction 1-hexadecanoyl-2-(9Z-octadecenoyl)-sn-glycerol + CDP-choline = 1-hexadecanoyl-2-(9Z-octadecenoyl)-sn-glycero-3-phosphocholine + CMP + H(+). It catalyses the reaction 1-hexadecanoyl-2-(4Z,7Z,10Z,13Z,16Z,19Z-docosahexaenoyl)-sn-glycerol + CDP-choline = 1-hexadecanoyl-2-(4Z,7Z,10Z,13Z,16Z,19Z-docosahexaenoyl)-sn-glycero-3-phosphocholine + CMP + H(+). The catalysed reaction is 1,2-dioctanoyl-sn-glycerol + CDP-choline = 1,2-dioctanoyl-sn-glycero-3-phosphocholine + CMP + H(+). It participates in phospholipid metabolism; phosphatidylcholine biosynthesis; phosphatidylcholine from phosphocholine: step 2/2. Catalyzes the final step of de novo phosphatidylcholine (PC) synthesis, i.e. the transfer of choline phosphate from CDP-choline to the free hydroxyl of a diacylglycerol (DAG), producing a PC. It thereby plays a central role in the formation and maintenance of vesicular membranes. In Mus musculus (Mouse), this protein is Cholinephosphotransferase 1.